The primary structure comprises 260 residues: Tropinone reductase 2 (260 aa).

An NADP(+)-binding site is contributed by 18-41; that stretch reads SRGIGYGIVEELASLGASVYTCSR. Substrate is bound at residue Ser146. The Proton acceptor role is filled by Tyr159. An NADP(+)-binding site is contributed by 192 to 196; it reads IATSL.

The protein belongs to the short-chain dehydrogenases/reductases (SDR) family. In terms of assembly, homodimer.

The enzyme catalyses pseudotropine + NADP(+) = tropinone + NADPH + H(+). It participates in alkaloid biosynthesis; tropane alkaloid biosynthesis. In terms of biological role, catalyzes the stereospecific reduction of tropinone to pseudotropine. The sequence is that of Tropinone reductase 2 (TR2) from Datura stramonium (Jimsonweed).